Here is a 94-residue protein sequence, read N- to C-terminus: Small ribosomal subunit protein uS19 (94 aa).

Positions 73–94 are disordered; it reads EFAPTRTYRGHGKDAERTTRRR. Over residues 83–94 the composition is skewed to basic and acidic residues; it reads HGKDAERTTRRR.

It belongs to the universal ribosomal protein uS19 family.

Protein S19 forms a complex with S13 that binds strongly to the 16S ribosomal RNA. This Thermomicrobium roseum (strain ATCC 27502 / DSM 5159 / P-2) protein is Small ribosomal subunit protein uS19.